The sequence spans 718 residues: Cyclomaltodextrin glucanotransferase (718 aa).

The signal sequence occupies residues 1–34 (MFQMAKRAFLSTTLTLGLLAGSALPFLPASAVYA). An A1 region spans residues 35-172 (DPDTAVTNKQ…GIKIVIDFAP (138 aa)). Ca(2+) is bound by residues Asp61, Asn63, Asn66, and Asn67. A disulfide bridge connects residues Cys77 and Cys84. 2 residues coordinate Ca(2+): Gly85 and Asp87. 134 to 135 (YW) serves as a coordination point for substrate. A Ca(2+)-binding site is contributed by Asn173. Residues 173-236 (NHTSPAMETD…NLYDLADFNH (64 aa)) are b. His174 is a binding site for substrate. Ile224 contacts Ca(2+). Residues 227-230 (NLYD) and Asp230 contribute to the substrate site. Asp233 contributes to the Ca(2+) binding site. The segment at 237-440 (NNATIDKYFK…LRKSNPAIAY (204 aa)) is A2. Arg261 contacts substrate. The active-site Nucleophile is the Asp263. Residues 266–267 (KH) and His267 contribute to the substrate site. Position 267 (His267) interacts with Ca(2+). Glu291 serves as the catalytic Proton donor. His361, Asp405, and Arg409 together coordinate substrate. Residues 441-528 (GSTQQRWINN…ATAVWQYTTA (88 aa)) form a c region. Residues 529–614 (ETTPTIGHVG…SNAYNNFTIL (86 aa)) form a d region. Residues 532-612 (PTIGHVGPVM…VNSNAYNNFT (81 aa)) enclose the IPT/TIG domain. One can recognise a CBM20 domain in the interval 613 to 718 (ILTGDQVTVR…GTATVTVNWQ (106 aa)). The e stretch occupies residues 615-718 (TGDQVTVRFV…GTATVTVNWQ (104 aa)).

It belongs to the glycosyl hydrolase 13 family. Monomer. Requires Ca(2+) as cofactor.

The protein localises to the secreted. It catalyses the reaction Cyclizes part of a (1-&gt;4)-alpha-D-glucan chain by formation of a (1-&gt;4)-alpha-D-glucosidic bond.. The polypeptide is Cyclomaltodextrin glucanotransferase (Niallia circulans (Bacillus circulans)).